The sequence spans 274 residues: Trehalose transport system permease protein SugB (274 aa).

Helical transmembrane passes span 8-28 (YWAV…LWIF), 70-90 (IGIG…AAYA), 102-122 (LIGA…TPLF), 137-157 (LILP…SAFF), 182-202 (VIVP…FIFA), and 239-259 (GSIA…VLIF). An ABC transmembrane type-1 domain is found at 66–259 (LINSIGIGLI…IPIIVFVLIF (194 aa)).

It belongs to the binding-protein-dependent transport system permease family. As to quaternary structure, the complex is composed of two ATP-binding proteins (SugC), two transmembrane proteins (Suga and SugB) and a solute-binding protein (LpqY).

Its subcellular location is the cell inner membrane. Part of the ABC transporter complex LpqY-SugA-SugB-SugC, which is highly specific for uptake of trehalose. Involved in the recycling of extracellular trehalose released from trehalose-containing molecules synthesized by M.tuberculosis. Trehalose uptake is essential for virulence. Probably responsible for the translocation of the substrate across the membrane. The chain is Trehalose transport system permease protein SugB (sugB) from Mycobacterium tuberculosis (strain CDC 1551 / Oshkosh).